We begin with the raw amino-acid sequence, 389 residues long: Alkanesulfonate monooxygenase (389 aa).

This sequence belongs to the SsuD family.

The enzyme catalyses an alkanesulfonate + FMNH2 + O2 = an aldehyde + FMN + sulfite + H2O + 2 H(+). Its function is as follows. Catalyzes the desulfonation of aliphatic sulfonates. The chain is Alkanesulfonate monooxygenase from Rhizobium etli (strain CIAT 652).